Here is a 64-residue protein sequence, read N- to C-terminus: Translation machinery-associated protein 7B (64 aa).

The interval 1–38 (MSSHEGGKKKALKQPKKQAKEMDEEEKAFKQKQKEEQK) is disordered. Positions 27–38 (KAFKQKQKEEQK) are enriched in basic and acidic residues.

It belongs to the TMA7 family.

This chain is Translation machinery-associated protein 7B, found in Homo sapiens (Human).